A 123-amino-acid polypeptide reads, in one-letter code: Large ribosomal subunit protein bL12 (123 aa).

It belongs to the bacterial ribosomal protein bL12 family. Homodimer. Part of the ribosomal stalk of the 50S ribosomal subunit. Forms a multimeric L10(L12)X complex, where L10 forms an elongated spine to which 2 to 4 L12 dimers bind in a sequential fashion. Binds GTP-bound translation factors.

In terms of biological role, forms part of the ribosomal stalk which helps the ribosome interact with GTP-bound translation factors. Is thus essential for accurate translation. The sequence is that of Large ribosomal subunit protein bL12 from Pseudoalteromonas atlantica (strain T6c / ATCC BAA-1087).